We begin with the raw amino-acid sequence, 252 residues long: Electron transfer flavoprotein subunit beta (252 aa).

This sequence belongs to the ETF beta-subunit/FixA family. In terms of assembly, heterodimer of an alpha and a beta subunit. The cofactor is AMP.

Its subcellular location is the cytoplasm. Its pathway is lipid metabolism; butanoate metabolism. Its function is as follows. Part of an electron transfer flavoprotein involved in syntrophic growth of S.wolfei with butyrate. Probably receives electrons from butyryl-CoA dehydrogenases, and transfers them to the membrane-bound quinone oxidoreductase Swol_0698. The protein is Electron transfer flavoprotein subunit beta of Syntrophomonas wolfei subsp. wolfei (strain DSM 2245B / Goettingen).